The sequence spans 330 residues: MVKKTKSNSLKKVATLALANLLLVGALTDNSAKAESKKDDTDLKLVSHNVYMLSTVLYPNWGQYKRADLIGQSSYIKNNDVVIFNEAFDNGASDKLLSNVKKEYPYQTPVLGRSQSGWDKTEGSYSSTVAEDGGVAIVSKYPIKEKIQHVFKSGCGFDNDSNKGFVYTKIEKNGKNVHVIGTHTQSEDSRCGAGHDRKIRAEQMKEISDFVKKKNIPKDETVYIGGDLNVNKGTPEFKDMLKNLNVNDVLYAGHNSTWDPQSNSIAKYNYPNGKPEHLDYIFTDKDHKQPKQLVNEVVTEKPKPWDVYAFPYYYVYNDFSDHYPIKAYSK.

An N-terminal signal peptide occupies residues 1-34; it reads MVKKTKSNSLKKVATLALANLLLVGALTDNSAKA. The cysteines at positions 155 and 191 are disulfide-linked.

The protein belongs to the neutral sphingomyelinase family. In terms of assembly, monomer.

Its subcellular location is the secreted. The catalysed reaction is a 1,2-diacyl-sn-glycero-3-phosphocholine + H2O = phosphocholine + a 1,2-diacyl-sn-glycerol + H(+). Its function is as follows. Bacterial hemolysins are exotoxins that attack blood cell membranes and cause cell rupture. Beta-hemolysin is a phospholipase C with specific activity toward sphingomyelins. Has a high specificity for sphingomyelin, hydrolyzes lysophosphatidylcholine at a much lower rate, but has no activity towards phosphatidylcholine, phosphatidylethanolamine, or phosphatidylserine. This chain is Phospholipase C (hlb), found in Staphylococcus aureus (strain NCTC 8325 / PS 47).